We begin with the raw amino-acid sequence, 89 residues long: UPF0237 protein lin0537 (89 aa).

The region spanning 4 to 78 is the ACT domain; it reads VLTVIGKDNV…EELQVKIHIQ (75 aa).

Belongs to the UPF0237 family.

This Listeria innocua serovar 6a (strain ATCC BAA-680 / CLIP 11262) protein is UPF0237 protein lin0537.